Reading from the N-terminus, the 234-residue chain is Orotidine 5'-phosphate decarboxylase (234 aa).

Substrate-binding positions include D14, K36, 63–72 (DMKLLDIDNT), T118, R179, Q188, G208, and R209. K65 serves as the catalytic Proton donor.

The protein belongs to the OMP decarboxylase family. Type 1 subfamily. Homodimer.

The enzyme catalyses orotidine 5'-phosphate + H(+) = UMP + CO2. It functions in the pathway pyrimidine metabolism; UMP biosynthesis via de novo pathway; UMP from orotate: step 2/2. Catalyzes the decarboxylation of orotidine 5'-monophosphate (OMP) to uridine 5'-monophosphate (UMP). This Rhizobium meliloti (strain 1021) (Ensifer meliloti) protein is Orotidine 5'-phosphate decarboxylase.